Here is an 850-residue protein sequence, read N- to C-terminus: DNA polymerase I (850 aa).

The 5'-3' exonuclease domain occupies 1-288 (MKLVIFDGNS…SIIKRLGLSE (288 aa)). Residues 470–850 (VDRDALIQYT…KEGLNWYETK (381 aa)) form a polymerase region.

Belongs to the DNA polymerase type-A family.

The enzyme catalyses DNA(n) + a 2'-deoxyribonucleoside 5'-triphosphate = DNA(n+1) + diphosphate. Its function is as follows. In addition to polymerase activity, this DNA polymerase exhibits 3'-5' and 5'-3' exonuclease activity. The polypeptide is DNA polymerase I (polA) (Caldicellulosiruptor bescii (strain ATCC BAA-1888 / DSM 6725 / KCTC 15123 / Z-1320) (Anaerocellum thermophilum)).